A 444-amino-acid polypeptide reads, in one-letter code: C4-dicarboxylate transport protein (444 aa).

Helical transmembrane passes span 21–41, 57–77, 92–112, 161–181, 201–221, 234–254, 320–340, 345–365, and 368–388; these read HLYV…HFYP, LVKM…IAGM, IYFL…ANVV, GDIL…ALVG, LVSI…AFTI, LLIG…LGAV, IYMT…LSLS, LLLV…AGFI, and AATL…ILGI.

This sequence belongs to the dicarboxylate/amino acid:cation symporter (DAACS) (TC 2.A.23) family.

The protein localises to the cell inner membrane. Its function is as follows. Responsible for the transport of dicarboxylates such as succinate, fumarate, and malate from the periplasm across the membrane. This Brucella anthropi (strain ATCC 49188 / DSM 6882 / CCUG 24695 / JCM 21032 / LMG 3331 / NBRC 15819 / NCTC 12168 / Alc 37) (Ochrobactrum anthropi) protein is C4-dicarboxylate transport protein.